A 278-amino-acid polypeptide reads, in one-letter code: Pca operon regulatory protein (278 aa).

Residues 31–91 (VAGISKGMAI…SDGHYFYLTP (61 aa)) enclose the HTH iclR-type domain. The segment at residues 53–72 (ITMAAEKTGMTRAAARRHLL) is a DNA-binding region (H-T-H motif). In terms of domain architecture, IclR-ED spans 106 to 278 (LPKISQPLLN…ETARELRNIL (173 aa)).

In terms of biological role, activates transcription of the pca operon. This chain is Pca operon regulatory protein (pcaU), found in Acinetobacter baylyi (strain ATCC 33305 / BD413 / ADP1).